Reading from the N-terminus, the 477-residue chain is Bifunctional protein HldE (477 aa).

The tract at residues 1–318 (MKVTLPEFER…ENAVRGRADT (318 aa)) is ribokinase. Lysine 179 is subject to N6-acetyllysine. 195-198 (NLSE) serves as a coordination point for ATP. The active site involves aspartate 264. The tract at residues 344-477 (MTNGVFDILH…IKKIQQDKKG (134 aa)) is cytidylyltransferase.

In the N-terminal section; belongs to the carbohydrate kinase PfkB family. This sequence in the C-terminal section; belongs to the cytidylyltransferase family. In terms of assembly, homodimer.

The catalysed reaction is D-glycero-beta-D-manno-heptose 7-phosphate + ATP = D-glycero-beta-D-manno-heptose 1,7-bisphosphate + ADP + H(+). The enzyme catalyses D-glycero-beta-D-manno-heptose 1-phosphate + ATP + H(+) = ADP-D-glycero-beta-D-manno-heptose + diphosphate. It participates in nucleotide-sugar biosynthesis; ADP-L-glycero-beta-D-manno-heptose biosynthesis; ADP-L-glycero-beta-D-manno-heptose from D-glycero-beta-D-manno-heptose 7-phosphate: step 1/4. It functions in the pathway nucleotide-sugar biosynthesis; ADP-L-glycero-beta-D-manno-heptose biosynthesis; ADP-L-glycero-beta-D-manno-heptose from D-glycero-beta-D-manno-heptose 7-phosphate: step 3/4. The protein operates within bacterial outer membrane biogenesis; LPS core biosynthesis. Catalyzes the phosphorylation of D-glycero-D-manno-heptose 7-phosphate at the C-1 position to selectively form D-glycero-beta-D-manno-heptose-1,7-bisphosphate. In terms of biological role, catalyzes the ADP transfer from ATP to D-glycero-beta-D-manno-heptose 1-phosphate, yielding ADP-D-glycero-beta-D-manno-heptose. The chain is Bifunctional protein HldE from Shigella flexneri.